The sequence spans 93 residues: ATP synthase subunit c (93 aa).

Transmembrane regions (helical) follow at residues Ala13–Ile33 and Ile58–Leu78.

Belongs to the ATPase C chain family. In terms of assembly, F-type ATPases have 2 components, F(1) - the catalytic core - and F(0) - the membrane proton channel. F(1) has five subunits: alpha(3), beta(3), gamma(1), delta(1), epsilon(1). F(0) has three main subunits: a(1), b(2) and c(10-14). The alpha and beta chains form an alternating ring which encloses part of the gamma chain. F(1) is attached to F(0) by a central stalk formed by the gamma and epsilon chains, while a peripheral stalk is formed by the delta and b chains.

It localises to the cell inner membrane. F(1)F(0) ATP synthase produces ATP from ADP in the presence of a proton or sodium gradient. F-type ATPases consist of two structural domains, F(1) containing the extramembraneous catalytic core and F(0) containing the membrane proton channel, linked together by a central stalk and a peripheral stalk. During catalysis, ATP synthesis in the catalytic domain of F(1) is coupled via a rotary mechanism of the central stalk subunits to proton translocation. Functionally, key component of the F(0) channel; it plays a direct role in translocation across the membrane. A homomeric c-ring of between 10-14 subunits forms the central stalk rotor element with the F(1) delta and epsilon subunits. This Campylobacter hominis (strain ATCC BAA-381 / DSM 21671 / CCUG 45161 / LMG 19568 / NCTC 13146 / CH001A) protein is ATP synthase subunit c.